The chain runs to 404 residues: Iron-sulfur assembly protein IscA2 (404 aa).

Residues 244-289 are a coiled coil; that stretch reads KEEDEKKLDKLLKKRNIKKRDIVTITEEAKEELKKIISINKKENNN.

It belongs to the HesB/IscA family. In terms of assembly, dimer. Homotetramer. Interacts with ABCB6.

It localises to the mitochondrion. It functions in the pathway cofactor biosynthesis; iron-sulfur cluster biosynthesis. In terms of biological role, participates in iron-sulfur cluster formation (ISC) pathway for iron-sulfur (Fe-S) cluster biogenesis. Can bind and transfer [4Fe-4S] clusters to target apo-proteins. This chain is Iron-sulfur assembly protein IscA2, found in Plasmodium falciparum (isolate 3D7).